We begin with the raw amino-acid sequence, 115 residues long: Succinate dehydrogenase hydrophobic membrane anchor subunit (115 aa).

Over 1-15 the chain is Cytoplasmic; it reads MVSNASALGRNGVHD. The chain crosses the membrane as a helical span at residues 16 to 36; the sequence is FILVRATAIVLTLYIIYMVGF. Topologically, residues 37-58 are periplasmic; it reads FATSGELTYEVWIGFFASAFTK. A helical transmembrane segment spans residues 59-80; sequence VFTLLALFSILIHAWIGMWQVL. Histidine 71 is a binding site for heme. Residues 81–90 are Cytoplasmic-facing; the sequence is TDYVKPLALR. Tyrosine 83 is a binding site for a ubiquinone. The chain crosses the membrane as a helical span at residues 91–115; the sequence is LMLQLVIVVALVVYVIYGFVVVWGV.

As to quaternary structure, part of an enzyme complex containing four subunits: a flavoprotein, an iron-sulfur protein, plus two membrane-anchoring proteins, SdhC and SdhD. The complex can form homotrimers. The cofactor is heme.

Its subcellular location is the cell inner membrane. The protein operates within carbohydrate metabolism; tricarboxylic acid cycle. Functionally, membrane-anchoring subunit of succinate dehydrogenase (SDH). This Escherichia coli O6:H1 (strain CFT073 / ATCC 700928 / UPEC) protein is Succinate dehydrogenase hydrophobic membrane anchor subunit (sdhD).